Reading from the N-terminus, the 463-residue chain is Lactadherin (463 aa).

Residues 1-22 (MQVSRVLAALCGMLLCASGLFA) form the signal peptide. 2 EGF-like domains span residues 24–61 (SGDFCDSSLCLNGGTCLTGQDNDIYCLCPEGFTGLVCN) and 64–108 (ERGP…IHCE). Intrachain disulfides connect cysteine 28/cysteine 39, cysteine 33/cysteine 49, and cysteine 51/cysteine 60. Asparagine 61 carries N-linked (GlcNAc...) asparagine glycosylation. Disulfide bonds link cysteine 68-cysteine 79, cysteine 73-cysteine 96, cysteine 98-cysteine 107, cysteine 148-cysteine 303, cysteine 290-cysteine 294, and cysteine 308-cysteine 463. Residues 87 to 89 (RGD) carry the Cell attachment site motif. 2 F5/8 type C domains span residues 148 to 303 (CSTQ…LLGC) and 308 to 463 (CSEP…LLGC). Residue asparagine 266 is glycosylated (N-linked (GlcNAc...) asparagine). Asparagine 316 and asparagine 426 each carry an N-linked (GlcNAc...) asparagine glycan.

In terms of processing, N-glycosylated. Isoform 1 also exists in both an O-glycosylated and a non-O-glycosylated form. Mammary epithelial cell surfaces and spermatozoan. Isoform 2 is present in brain, heart, kidney and spleen and at low levels in lung, liver, small intestine and testis.

It is found in the membrane. The protein resides in the secreted. The protein localises to the cytoplasmic vesicle. Its subcellular location is the secretory vesicle. It localises to the acrosome membrane. In terms of biological role, contributes to phagocytic removal of apoptotic cells in many tissues. Specific ligand for the alpha-v/beta-3 and alpha-v/beta-5 receptors. Also binds to phosphatidylserine-enriched cell surfaces in a receptor-independent manner. Zona pellucida-binding protein which may play a role in gamete interaction. Plays an important role in the maintenance of intestinal epithelial homeostasis and the promotion of mucosal healing. Promotes VEGF-dependent neovascularization. The chain is Lactadherin (Mfge8) from Mus musculus (Mouse).